A 3637-amino-acid polypeptide reads, in one-letter code: Replicase polyprotein 1ab (3637 aa).

A C4-type; atypical zinc finger spans residues 8 to 28 (CLCTPNARVFWERGQVYCTRC). A Peptidase C31 domain is found at 69-181 (ECRPGGMCWL…KGLCPFADAR (113 aa)). The segment at 69-183 (ECRPGGMCWL…LCPFADARAN (115 aa)) is PCP1-alpha. Active-site for Nsp1-alpha papain-like cysteine proteinase activity residues include Cys76 and His147. The interval 262–380 (RDTKFSKCWE…KFRFQTRKYY (119 aa)) is PCP1-beta. Residues 262-381 (RDTKFSKCWE…FRFQTRKYYG (120 aa)) enclose the Peptidase C32 domain. Active-site for Nsp1-beta papain-like cysteine proteinase activity residues include Cys269 and His340. Residues 381-486 (GYSPPGDGAC…RGVCGECEMG (106 aa)) form the Peptidase C33 domain. Residues Cys390 and His456 each act as for Nsp2 cysteine proteinase activity in the active site. 2 disordered regions span residues 676–743 (CKPK…AALK) and 865–899 (QQKT…GVSL). A compositionally biased stretch (basic residues) spans 678 to 689 (PKRKRSRKKKTR). Composition is skewed to basic and acidic residues over residues 714 to 727 (DTRE…KAEK) and 873 to 895 (GERE…KRDL). 7 helical membrane-spanning segments follow: residues 940–960 (WLNH…SFIF), 981–1001 (VLLC…CVFG), 1083–1103 (FYFL…AVAL), 1287–1307 (IADF…SAWL), 1362–1382 (ALMV…SLLV), 1390–1410 (CLLM…PFVL), and 1423–1443 (VQFF…VVLI). Positions 979–1103 (CCVLLCFYLP…LGLVFLAVAL (125 aa)) are HD1. Residues 1287–1446 (IADFVCLGLY…ASVVVLISSW (160 aa)) are HD2. Positions 1511–1712 (GSLRTRGCAK…AVVESLPALE (202 aa)) constitute a Peptidase S32 domain. Catalysis depends on charge relay system; for 3C-like serine proteinase activity residues His1549, Asp1574, and Ser1626. A run of 5 helical transmembrane segments spans residues 1735-1755 (DVPV…VMLA), 1761-1781 (FALS…AVAF), 1801-1821 (LVIA…LGQL), 1824-1844 (CCLM…LYLG), and 1853-1873 (EIFF…SLFK). The HD3 stretch occupies residues 1735-1872 (DVPVIRIAFF…MFLPLFLSLF (138 aa)). Residues 2214–2372 (SLNGLQQASA…LPYKLHPVRG (159 aa)) enclose the NiRAN domain. Residues 2611-2745 (GRCLEADLAS…YDESSELPNY (135 aa)) enclose the RdRp catalytic domain. Positions 2865 to 2928 (KKKCRTCAHC…SPVMSLNTEL (64 aa)) constitute an AV ZBD domain. Zn(2+) is bound by residues Cys2871, Cys2874, Cys2884, Cys2889, His2892, His2894, His2896, His2898, Cys2905, His2907, Cys2914, and Cys2917. Residues 2985 to 3137 (QVMKVAQTCA…AFALMLGRQL (153 aa)) form the (+)RNA virus helicase ATP-binding domain. Position 3013 to 3020 (3013 to 3020 (GAPGTGKT)) interacts with ATP. Residues 3138–3269 (IEVFRFGPSI…CGEQPMMISE (132 aa)) enclose the (+)RNA virus helicase C-terminal domain. Residues 3293-3389 (EGTASPLPQV…LTKFLKGKPV (97 aa)) form the AV-Nsp11N/CoV-Nsp15M domain. Positions 3391–3513 (LPDSLMSTGR…MVWKDATAYF (123 aa)) constitute a NendoU domain. Residues His3422, His3437, and Lys3466 contribute to the active site.

This sequence belongs to the arteriviridae polyprotein family. Post-translationally, specific enzymatic cleavages in vivo by its own proteases yield mature proteins. There are two alternative pathways for processing. Either nsp4-5 is cleaved, which represents the major pathway or the nsp5-6 and nsp6-7 are processed, which represents the minor pathway. The major pathway occurs when nsp2 acts as a cofactor for nsp4.

The protein resides in the host membrane. The protein localises to the host cytoplasm. Its subcellular location is the host perinuclear region. The catalysed reaction is RNA(n) + a ribonucleoside 5'-triphosphate = RNA(n+1) + diphosphate. It catalyses the reaction ATP + H2O = ADP + phosphate + H(+). The enzyme catalyses uridylyl-uridylyl-ribonucleotide-RNA = a 3'-end uridylyl-2',3'-cyclophospho-uridine-RNA + a 5'-end dephospho-ribonucleoside-RNA. The replicase polyprotein 1ab is a multifunctional protein: it contains the activities necessary for the transcription of negative stranded RNA, leader RNA, subgenomic mRNAs and progeny virion RNA as well as proteinases responsible for the cleavage of the polyprotein into functional products. Functionally, the Nsp1 chain is essential for viral subgenomic mRNA synthesis. Its function is as follows. The 3C-like serine proteinase chain is responsible for the majority of cleavages as it cleaves the C-terminus of the polyprotein. In terms of biological role, the helicase chain, which contains a zinc finger structure, displays RNA and DNA duplex-unwinding activities with 5' to 3' polarity. Plays a role in viral transcription/replication and prevents the simultaneous activation of host cell dsRNA sensors, such as MDA5/IFIH1, OAS, and PKR. Acts by degrading the 5'-polyuridines generated during replication of the poly(A) region of viral genomic and subgenomic RNAs. Catalyzes a two-step reaction in which a 2'3'-cyclic phosphate (2'3'-cP) is first generated by 2'-O transesterification, which is then hydrolyzed to a 3'-phosphate (3'-P). If not degraded, poly(U) RNA would hybridize with poly(A) RNA tails and activate host dsRNA sensors. This chain is Replicase polyprotein 1ab (rep), found in Mus musculus domesticus (western European house mouse).